The following is a 202-amino-acid chain: MENYINLFIRAVFIENLALSFFLGMCTFLAVSKKVKTAFGLGVAVIVVLGISVPVNNLIYHNILAPGALEWAGFPDADLSFLKFLTFIGVIAAIVQILEMALDKYVPALYNALGIFLPLITVNCAIFGGVAFMVERDYNFGESVVFGIGSGVGWALAIVALAAVREKLKYADVPDGLRGLGITFISVGLIGLGFMSFSGVSL.

The next 6 membrane-spanning stretches (helical) occupy residues Ala-11–Val-31, Phe-39–Ile-59, Phe-81–Ala-101, Gly-114–Val-134, Val-144–Val-164, and Leu-180–Val-200.

It belongs to the NqrDE/RnfAE family. As to quaternary structure, composed of six subunits; NqrA, NqrB, NqrC, NqrD, NqrE and NqrF.

It is found in the cell inner membrane. The enzyme catalyses a ubiquinone + n Na(+)(in) + NADH + H(+) = a ubiquinol + n Na(+)(out) + NAD(+). Functionally, NQR complex catalyzes the reduction of ubiquinone-1 to ubiquinol by two successive reactions, coupled with the transport of Na(+) ions from the cytoplasm to the periplasm. NqrA to NqrE are probably involved in the second step, the conversion of ubisemiquinone to ubiquinol. In Idiomarina loihiensis (strain ATCC BAA-735 / DSM 15497 / L2-TR), this protein is Na(+)-translocating NADH-quinone reductase subunit E.